The sequence spans 282 residues: Phycocyanobilin lyase subunit beta (282 aa).

The protein belongs to the CpcE/RpcE/PecE family. In terms of assembly, cpcE and CpcF associate to form a lyase.

Its function is as follows. Required for the chromophorylation of the CpcA gene product. This chain is Phycocyanobilin lyase subunit beta (cpcF1), found in Pseudanabaena tenuis (strain PCC 7409).